The primary structure comprises 486 residues: ATP synthase subunit beta (486 aa).

Positions 1–12 are enriched in basic and acidic residues; the sequence is MTTTAEKTDRPG. The interval 1–22 is disordered; sequence MTTTAEKTDRPGKPGSSDTSGR. 171 to 178 provides a ligand contact to ATP; it reads GGAGVGKT.

This sequence belongs to the ATPase alpha/beta chains family. F-type ATPases have 2 components, CF(1) - the catalytic core - and CF(0) - the membrane proton channel. CF(1) has five subunits: alpha(3), beta(3), gamma(1), delta(1), epsilon(1). CF(0) has three main subunits: a(1), b(2) and c(9-12). The alpha and beta chains form an alternating ring which encloses part of the gamma chain. CF(1) is attached to CF(0) by a central stalk formed by the gamma and epsilon chains, while a peripheral stalk is formed by the delta and b chains.

It is found in the cell membrane. The enzyme catalyses ATP + H2O + 4 H(+)(in) = ADP + phosphate + 5 H(+)(out). Produces ATP from ADP in the presence of a proton gradient across the membrane. The catalytic sites are hosted primarily by the beta subunits. In Mycobacterium tuberculosis (strain ATCC 25177 / H37Ra), this protein is ATP synthase subunit beta.